The sequence spans 639 residues: Chaperone protein HtpG (639 aa).

The interval 1 to 348 is a; substrate-binding; that stretch reads MAQYEFQTEV…SEDLPLNVSR (348 aa). Residues 349–565 are b; sequence EILQQNRVLA…ENDPTVQMER (217 aa). Residues 566-639 form a c region; the sequence is LMRATGQTHK…KRVNRLLARG (74 aa).

The protein belongs to the heat shock protein 90 family. In terms of assembly, homodimer.

Its subcellular location is the cytoplasm. Its function is as follows. Molecular chaperone. Has ATPase activity. This is Chaperone protein HtpG from Treponema pallidum (strain Nichols).